The following is a 361-amino-acid chain: Hydroxycarboxylate dehydrogenase B (361 aa).

NAD(+)-binding positions include H48, 122–124, 178–182, H234, N270, and 313–316; these read GRI, LLDYA, and GEWE.

Belongs to the LDH2/MDH2 oxidoreductase family.

It carries out the reaction 2-hydroxyglutarate + NADP(+) = 2-oxoglutarate + NADPH + H(+). It catalyses the reaction 2-hydroxyglutarate + NAD(+) = 2-oxoglutarate + NADH + H(+). The catalysed reaction is 3-phenyllactate + NADP(+) = 3-phenylpyruvate + NADPH + H(+). The enzyme catalyses 3-phenyllactate + NAD(+) = 3-phenylpyruvate + NADH + H(+). It carries out the reaction (2R)-2-hydroxy-3-(4-hydroxyphenyl)propanoate + NAD(+) = 3-(4-hydroxyphenyl)pyruvate + NADH + H(+). It catalyses the reaction (2R)-2-hydroxy-3-(4-hydroxyphenyl)propanoate + NADP(+) = 3-(4-hydroxyphenyl)pyruvate + NADPH + H(+). The catalysed reaction is (2R)-3-(3,4-dihydroxyphenyl)lactate + NADP(+) = 3-(3,4-dihydroxyphenyl)pyruvate + NADPH + H(+). The enzyme catalyses (2R)-3-(3,4-dihydroxyphenyl)lactate + NAD(+) = 3-(3,4-dihydroxyphenyl)pyruvate + NADH + H(+). Functionally, catalyzes the NAD(P)H-dependent reduction of 2-oxoglutarate, phenylpyruvate and (4-hydroxyphenyl)pyruvate, leading to the respective 2-hydroxycarboxylate in vitro. Shows a preference for NADPH over NADH as a redox partner. Do not catalyze the reverse reactions. In Escherichia coli (strain K12), this protein is Hydroxycarboxylate dehydrogenase B.